Reading from the N-terminus, the 277-residue chain is Diaminopimelate epimerase (277 aa).

Substrate is bound by residues asparagine 13, glutamine 46, and asparagine 66. Cysteine 75 functions as the Proton donor in the catalytic mechanism. Substrate-binding positions include 76 to 77 (GN), asparagine 160, asparagine 193, and 211 to 212 (ER). Cysteine 220 serves as the catalytic Proton acceptor. Residue 221 to 222 (GS) coordinates substrate.

Belongs to the diaminopimelate epimerase family. In terms of assembly, homodimer.

It is found in the cytoplasm. It carries out the reaction (2S,6S)-2,6-diaminopimelate = meso-2,6-diaminopimelate. The protein operates within amino-acid biosynthesis; L-lysine biosynthesis via DAP pathway; DL-2,6-diaminopimelate from LL-2,6-diaminopimelate: step 1/1. Catalyzes the stereoinversion of LL-2,6-diaminopimelate (L,L-DAP) to meso-diaminopimelate (meso-DAP), a precursor of L-lysine and an essential component of the bacterial peptidoglycan. The sequence is that of Diaminopimelate epimerase from Legionella pneumophila (strain Corby).